The sequence spans 306 residues: Bifunctional protein FolD (306 aa).

NADP(+) is bound by residues 164-166, serine 189, and threonine 230; that span reads GRS.

Belongs to the tetrahydrofolate dehydrogenase/cyclohydrolase family. Homodimer.

The enzyme catalyses (6R)-5,10-methylene-5,6,7,8-tetrahydrofolate + NADP(+) = (6R)-5,10-methenyltetrahydrofolate + NADPH. It carries out the reaction (6R)-5,10-methenyltetrahydrofolate + H2O = (6R)-10-formyltetrahydrofolate + H(+). It functions in the pathway one-carbon metabolism; tetrahydrofolate interconversion. Functionally, catalyzes the oxidation of 5,10-methylenetetrahydrofolate to 5,10-methenyltetrahydrofolate and then the hydrolysis of 5,10-methenyltetrahydrofolate to 10-formyltetrahydrofolate. The protein is Bifunctional protein FolD of Solibacter usitatus (strain Ellin6076).